Here is a 189-residue protein sequence, read N- to C-terminus: Elongation factor P (189 aa).

The protein belongs to the elongation factor P family.

The protein localises to the cytoplasm. It functions in the pathway protein biosynthesis; polypeptide chain elongation. In terms of biological role, involved in peptide bond synthesis. Stimulates efficient translation and peptide-bond synthesis on native or reconstituted 70S ribosomes in vitro. Probably functions indirectly by altering the affinity of the ribosome for aminoacyl-tRNA, thus increasing their reactivity as acceptors for peptidyl transferase. The chain is Elongation factor P from Campylobacter fetus subsp. fetus (strain 82-40).